The sequence spans 89 residues: Small ribosomal subunit protein uS15 (89 aa).

It belongs to the universal ribosomal protein uS15 family. Part of the 30S ribosomal subunit. Forms a bridge to the 50S subunit in the 70S ribosome, contacting the 23S rRNA.

In terms of biological role, one of the primary rRNA binding proteins, it binds directly to 16S rRNA where it helps nucleate assembly of the platform of the 30S subunit by binding and bridging several RNA helices of the 16S rRNA. Its function is as follows. Forms an intersubunit bridge (bridge B4) with the 23S rRNA of the 50S subunit in the ribosome. The chain is Small ribosomal subunit protein uS15 from Lactobacillus gasseri (strain ATCC 33323 / DSM 20243 / BCRC 14619 / CIP 102991 / JCM 1131 / KCTC 3163 / NCIMB 11718 / NCTC 13722 / AM63).